The sequence spans 139 residues: Peptide methionine sulfoxide reductase MsrB (139 aa).

A MsrB domain is found at 9 to 131; it reads TPSDNTEMTE…NSASLSFIDD (123 aa). Zn(2+) contacts are provided by Cys48, Cys51, Cys97, and Cys100. Cys120 serves as the catalytic Nucleophile.

It belongs to the MsrB Met sulfoxide reductase family. Zn(2+) is required as a cofactor.

The catalysed reaction is L-methionyl-[protein] + [thioredoxin]-disulfide + H2O = L-methionyl-(R)-S-oxide-[protein] + [thioredoxin]-dithiol. This is Peptide methionine sulfoxide reductase MsrB from Pectobacterium atrosepticum (strain SCRI 1043 / ATCC BAA-672) (Erwinia carotovora subsp. atroseptica).